The sequence spans 151 residues: Ribosome maturation factor RimP (151 aa).

It belongs to the RimP family.

The protein localises to the cytoplasm. Its function is as follows. Required for maturation of 30S ribosomal subunits. This is Ribosome maturation factor RimP from Thermoanaerobacter pseudethanolicus (strain ATCC 33223 / 39E) (Clostridium thermohydrosulfuricum).